A 233-amino-acid polypeptide reads, in one-letter code: Phosphoribosylformylglycinamidine synthase subunit PurQ (233 aa).

The Glutamine amidotransferase type-1 domain maps to 3 to 233 (SAVLVFPGIN…GLVAHLERAA (231 aa)). The Nucleophile role is filled by Cys-87. Active-site residues include His-204 and Glu-206.

As to quaternary structure, part of the FGAM synthase complex composed of 1 PurL, 1 PurQ and 2 PurS subunits.

It is found in the cytoplasm. The enzyme catalyses N(2)-formyl-N(1)-(5-phospho-beta-D-ribosyl)glycinamide + L-glutamine + ATP + H2O = 2-formamido-N(1)-(5-O-phospho-beta-D-ribosyl)acetamidine + L-glutamate + ADP + phosphate + H(+). It carries out the reaction L-glutamine + H2O = L-glutamate + NH4(+). The protein operates within purine metabolism; IMP biosynthesis via de novo pathway; 5-amino-1-(5-phospho-D-ribosyl)imidazole from N(2)-formyl-N(1)-(5-phospho-D-ribosyl)glycinamide: step 1/2. In terms of biological role, part of the phosphoribosylformylglycinamidine synthase complex involved in the purines biosynthetic pathway. Catalyzes the ATP-dependent conversion of formylglycinamide ribonucleotide (FGAR) and glutamine to yield formylglycinamidine ribonucleotide (FGAM) and glutamate. The FGAM synthase complex is composed of three subunits. PurQ produces an ammonia molecule by converting glutamine to glutamate. PurL transfers the ammonia molecule to FGAR to form FGAM in an ATP-dependent manner. PurS interacts with PurQ and PurL and is thought to assist in the transfer of the ammonia molecule from PurQ to PurL. The sequence is that of Phosphoribosylformylglycinamidine synthase subunit PurQ from Nitrobacter winogradskyi (strain ATCC 25391 / DSM 10237 / CIP 104748 / NCIMB 11846 / Nb-255).